The sequence spans 33 residues: Cytochrome c oxidase subunit 5B liver, mitochondrial (33 aa).

The protein belongs to the cytochrome c oxidase subunit 5B family. As to quaternary structure, component of the cytochrome c oxidase (complex IV, CIV), a multisubunit enzyme composed of 14 subunits. The complex is composed of a catalytic core of 3 subunits MT-CO1, MT-CO2 and MT-CO3, encoded in the mitochondrial DNA, and 11 supernumerary subunits COX4I, COX5A, COX5B, COX6A, COX6B, COX6C, COX7A, COX7B, COX7C, COX8 and NDUFA4, which are encoded in the nuclear genome. The complex exists as a monomer or a dimer and forms supercomplexes (SCs) in the inner mitochondrial membrane with NADH-ubiquinone oxidoreductase (complex I, CI) and ubiquinol-cytochrome c oxidoreductase (cytochrome b-c1 complex, complex III, CIII), resulting in different assemblies (supercomplex SCI(1)III(2)IV(1) and megacomplex MCI(2)III(2)IV(2)).

It is found in the mitochondrion inner membrane. It participates in energy metabolism; oxidative phosphorylation. Functionally, component of the cytochrome c oxidase, the last enzyme in the mitochondrial electron transport chain which drives oxidative phosphorylation. The respiratory chain contains 3 multisubunit complexes succinate dehydrogenase (complex II, CII), ubiquinol-cytochrome c oxidoreductase (cytochrome b-c1 complex, complex III, CIII) and cytochrome c oxidase (complex IV, CIV), that cooperate to transfer electrons derived from NADH and succinate to molecular oxygen, creating an electrochemical gradient over the inner membrane that drives transmembrane transport and the ATP synthase. Cytochrome c oxidase is the component of the respiratory chain that catalyzes the reduction of oxygen to water. Electrons originating from reduced cytochrome c in the intermembrane space (IMS) are transferred via the dinuclear copper A center (CU(A)) of subunit 2 and heme A of subunit 1 to the active site in subunit 1, a binuclear center (BNC) formed by heme A3 and copper B (CU(B)). The BNC reduces molecular oxygen to 2 water molecules using 4 electrons from cytochrome c in the IMS and 4 protons from the mitochondrial matrix. This Oncorhynchus mykiss (Rainbow trout) protein is Cytochrome c oxidase subunit 5B liver, mitochondrial.